The chain runs to 342 residues: Platelet-activating factor receptor (342 aa).

Residues Met1 to Thr16 lie on the Extracellular side of the membrane. Asn4 is a glycosylation site (N-linked (GlcNAc...) asparagine). A helical membrane pass occupies residues Leu17–Trp38. The Cytoplasmic portion of the chain corresponds to Val39–Ile54. Residues Phe55–Ile74 traverse the membrane as a helical segment. Over Val75–Asn91 the chain is Extracellular. The cysteines at positions 90 and 173 are disulfide-linked. The chain crosses the membrane as a helical span at residues Leu92 to Tyr113. The Cytoplasmic portion of the chain corresponds to Asn114–Arg133. Residues Gly134 to Leu155 traverse the membrane as a helical segment. The Extracellular portion of the chain corresponds to Asp156–Val184. 2 N-linked (GlcNAc...) asparagine glycosylation sites follow: Asn163 and Asn169. The helical transmembrane segment at Leu185 to Cys205 threads the bilayer. The Cytoplasmic portion of the chain corresponds to Asn206 to Met233. Residues Val234–Pro254 traverse the membrane as a helical segment. The Extracellular segment spans residues Trp255–Gln276. The helical transmembrane segment at Val277–Leu296 threads the bilayer. Topologically, residues Thr297–Tyr342 are cytoplasmic.

Belongs to the G-protein coupled receptor 1 family. In terms of assembly, interacts with ARRB1. As to expression, found in oviductal epithelial and stroma cells. Levels in the oviduct are raised at days 2-4 of both pregnancy and of the estrus cycle. In the endometrium, localization is predominantly to the apical borders of glandular and luminal epithelial cells. Expressed at lower levels in endometrial stromal cells. Levels in the endometrium are increased at day 20 of pregnancy (at protein level).

Its subcellular location is the cell membrane. In terms of biological role, receptor for platelet activating factor, a chemotactic phospholipid mediator that possesses potent inflammatory, smooth-muscle contractile and hypotensive activity. Seems to mediate its action via a G protein that activates a phosphatidylinositol-calcium second messenger system. May be involved in the morphological and physical modifications of the oviduct and uterus during the estrus cycle and early pregnancy. In Bos taurus (Bovine), this protein is Platelet-activating factor receptor.